The chain runs to 129 residues: C-type natriuretic peptide 1 (129 aa).

Positions 1-24 are cleaved as a signal peptide; that stretch reads MSYKRGTCLGFIMLLMVSHHHTKG. Positions 25-107 are excised as a propeptide; the sequence is KPLSSLQNLS…SRRYRQRNKK (83 aa). The cysteines at positions 113 and 129 are disulfide-linked.

It belongs to the natriuretic peptide family.

Its subcellular location is the secreted. Functionally, hormone which plays a role in endochondral ossification through regulation of cartilaginous growth plate chondrocytes proliferation and differentiation. May also be vasoactive and natriuretic. May be important for freshwater adaptation. This is C-type natriuretic peptide 1 from Aquarana catesbeiana (American bullfrog).